Consider the following 397-residue polypeptide: Chorismate synthase (397 aa).

Residues R40 and R46 each coordinate NADP(+). FMN-binding positions include 129–131, 257–258, G302, 317–321, and R343; these read RSS, QA, and KPISS.

The protein belongs to the chorismate synthase family. In terms of assembly, homotetramer. Requires FMNH2 as cofactor.

It carries out the reaction 5-O-(1-carboxyvinyl)-3-phosphoshikimate = chorismate + phosphate. It functions in the pathway metabolic intermediate biosynthesis; chorismate biosynthesis; chorismate from D-erythrose 4-phosphate and phosphoenolpyruvate: step 7/7. Its function is as follows. Catalyzes the anti-1,4-elimination of the C-3 phosphate and the C-6 proR hydrogen from 5-enolpyruvylshikimate-3-phosphate (EPSP) to yield chorismate, which is the branch point compound that serves as the starting substrate for the three terminal pathways of aromatic amino acid biosynthesis. This reaction introduces a second double bond into the aromatic ring system. The protein is Chorismate synthase of Chlorobium phaeobacteroides (strain DSM 266 / SMG 266 / 2430).